The sequence spans 85 residues: Putative sodium channel toxin Ts34 (85 aa).

The signal sequence occupies residues 1-17 (MNLPLLLLITILIEIHA). Positions 19–82 (KDGYVIYKNS…IYGETGSYCW (64 aa)) constitute an LCN-type CS-alpha/beta domain. 4 cysteine pairs are disulfide-bonded: Cys30–Cys81, Cys34–Cys57, Cys43–Cys62, and Cys47–Cys64.

Belongs to the long (4 C-C) scorpion toxin superfamily. Sodium channel inhibitor family. Expressed by the venom gland.

It is found in the secreted. Putative sodium channel toxin. The sequence is that of Putative sodium channel toxin Ts34 from Tityus serrulatus (Brazilian scorpion).